Reading from the N-terminus, the 962-residue chain is Glycine dehydrogenase (decarboxylating) (962 aa).

Position 709 is an N6-(pyridoxal phosphate)lysine (Lys-709).

The protein belongs to the GcvP family. The glycine cleavage system is composed of four proteins: P, T, L and H. Requires pyridoxal 5'-phosphate as cofactor.

It carries out the reaction N(6)-[(R)-lipoyl]-L-lysyl-[glycine-cleavage complex H protein] + glycine + H(+) = N(6)-[(R)-S(8)-aminomethyldihydrolipoyl]-L-lysyl-[glycine-cleavage complex H protein] + CO2. In terms of biological role, the glycine cleavage system catalyzes the degradation of glycine. The P protein binds the alpha-amino group of glycine through its pyridoxal phosphate cofactor; CO(2) is released and the remaining methylamine moiety is then transferred to the lipoamide cofactor of the H protein. In Shewanella loihica (strain ATCC BAA-1088 / PV-4), this protein is Glycine dehydrogenase (decarboxylating).